Here is a 566-residue protein sequence, read N- to C-terminus: Transcription factor tasR (566 aa).

Residues 1-30 (MISASRMEESASSSSLSDAAAPPPGAALQS) are compositionally biased toward low complexity. The segment at 1–31 (MISASRMEESASSSSLSDAAAPPPGAALQSI) is disordered. A DNA-binding region (zn(2)-C6 fungal-type) is located at residues 35–68 (CDRCRFHKLKCNVPAAGHGGPVPCERCTRAKVPC). Disordered stretches follow at residues 72–174 (RRRR…PGQH), 346–382 (EFIV…GGDD), 422–453 (SESD…TGTA), and 500–551 (RGVG…GLGG). Low complexity-rich tracts occupy residues 89-108 (PTRR…TSAA) and 359-378 (SESS…NNEA). Over residues 501-532 (GVGGGGGGGGGGGGGGGGGVGGGGGGGGGPGG) the composition is skewed to gly residues.

Its subcellular location is the nucleus. Its function is as follows. Transcription factor that regulates the expression of the gene cluster that mediates the biosynthesis of the tetramic acids Sch210971 and Sch210972, potential anti-HIV fungal natural product that contain a decalin core. The protein is Transcription factor tasR of Hapsidospora irregularis.